The primary structure comprises 409 residues: Lissencephaly-1 homolog (409 aa).

Residues 7–39 (QEEELRFAVADYLQSCGYTNALEAFKKDASIPK) enclose the LisH domain. Residues 56–81 (SVVRLQKKVMDLELRLNNTTREMNSG) are a coiled coil. The segment covering 75 to 92 (TREMNSGVPTRNSRSSND) has biased composition (polar residues). The disordered stretch occupies residues 75-105 (TREMNSGVPTRNSRSSNDWIPRPPEKHSLSG). WD repeat units follow at residues 105-146 (GHRS…RTLR), 147-186 (GHTDSVQDLAFDSSGKLLASSSADMTVKIWDFQTFECRMT), 189-228 (GHDHNVSSVCFLPSGDFLLSSSRDKTIKMWEVATGYCVYN), 231-270 (GHREWVRRVAVASDGSLMASCSNDQTVRIWSLSSKECKEE), 273-332 (GHEH…CLFS), 335-374 (GHDNWVRGLAFHAGGKYLTSASDDKTIKIWELRHKRCSKS), and 377-409 (AHNHFVTTIDFHRSSPFVITGSVDLTIKVWECR).

This sequence belongs to the WD repeat LIS1/nudF family.

It localises to the cytoplasm. Its subcellular location is the cytoskeleton. The protein localises to the microtubule organizing center. It is found in the centrosome. Functionally, positively regulates the activity of the minus-end directed microtubule motor protein dynein. May enhance dynein-mediated microtubule sliding by targeting dynein to the microtubule plus end. Required for several dynein- and microtubule-dependent processes. The chain is Lissencephaly-1 homolog from Trichoplax adhaerens (Trichoplax reptans).